The sequence spans 418 residues: Gamma-glutamyl phosphate reductase (418 aa).

The protein belongs to the gamma-glutamyl phosphate reductase family.

The protein localises to the cytoplasm. The enzyme catalyses L-glutamate 5-semialdehyde + phosphate + NADP(+) = L-glutamyl 5-phosphate + NADPH + H(+). It functions in the pathway amino-acid biosynthesis; L-proline biosynthesis; L-glutamate 5-semialdehyde from L-glutamate: step 2/2. Functionally, catalyzes the NADPH-dependent reduction of L-glutamate 5-phosphate into L-glutamate 5-semialdehyde and phosphate. The product spontaneously undergoes cyclization to form 1-pyrroline-5-carboxylate. The protein is Gamma-glutamyl phosphate reductase of Lacticaseibacillus casei (strain BL23) (Lactobacillus casei).